We begin with the raw amino-acid sequence, 326 residues long: AA10 family lytic polysaccharide monooxygenase C (326 aa).

A signal peptide spans 1–32; it reads MVFSNSNASVSLFRLVALVATLSHLVFTFVDA. Residues histidine 33 and histidine 118 each contribute to the Cu(2+) site. The 168-residue stretch at 33-200 folds into the Chitin-binding type-4 domain; sequence HGYVTFPASR…ANAFYQCLDL (168 aa). Cysteines 81 and 197 form a disulfide. 4 N-linked (GlcNAc...) asparagine glycosylation sites follow: asparagine 206, asparagine 215, asparagine 266, and asparagine 303. The disordered stretch occupies residues 206–326; the sequence is NSSSSSSSSN…KSQMRRDRQG (121 aa). Positions 207-281 are enriched in low complexity; it reads SSSSSSSSNS…NNGGSSGSTT (75 aa).

Belongs to the polysaccharide monooxygenase AA10 family. It depends on Cu(2+) as a cofactor.

The protein localises to the secreted. Its function is as follows. Lytic polysaccharide monooxygenase (LPMO) that oxidatively cleaves alpha- and beta-chitin with C1 regioselectivity. Catalysis by LPMOs requires the reduction of the active-site copper from Cu(II) to Cu(I) by a reducing agent and H(2)O(2) or O(2) as a cosubstrate. Exhibits enzymatic activity on U.maydis fungal cell wall chitin and Boosts chitin hydrolysis by chitinase GH18A. This is AA10 family lytic polysaccharide monooxygenase C from Mycosarcoma maydis (Corn smut fungus).